Here is a 310-residue protein sequence, read N- to C-terminus: Apolipoprotein E (310 aa).

The first 18 residues, 1-18 (MKALWAVLLATLLTGCLS), serve as a signal peptide directing secretion. A run of 8 repeats spans residues 72-93 (VLME…EQLG), 94-115 (PVAE…ARLG), 116-137 (ADME…TMLG), 138-159 (QSTE…KRLM), 160-181 (RDAE…EGAE), 182-203 (RGVS…QRTA), 204-225 (NLGA…DRLR), and 226-247 (GRLE…EHME). Residues 72-247 (VLMEDTMTEV…RLEEMREHME (176 aa)) are 8 X 22 AA approximate tandem repeats. Met-135 is subject to Methionine sulfoxide. The tract at residues 150–160 (HLRKMRKRLMR) is LDL and other lipoprotein receptors binding. Residues 150-160 (HLRKMRKRLMR) are LDL receptor binding. 154–157 (MRKR) contacts heparin. A lipid-binding and lipoprotein association region spans residues 202–282 (TANLGAGVAQ…GWFEPLVEDM (81 aa)). Residue 221–228 (GDRLRGRL) participates in heparin binding. A homooligomerization region spans residues 258–310 (QQIRLQAEIFQARLKGWFEPLVEDMQRQLANLVEKIQASTNSVLSTSVPQENQ). Residues 270–282 (RLKGWFEPLVEDM) are specificity for association with VLDL.

It belongs to the apolipoprotein A1/A4/E family. In terms of assembly, homotetramer. May interact with ABCA1; functionally associated with ABCA1 in the biogenesis of HDLs. May interact with APP/A4 amyloid-beta peptide; the interaction is extremely stable in vitro but its physiological significance is unclear. May interact with MAPT. May interact with MAP2. In the cerebrospinal fluid, interacts with secreted SORL1. Interacts with PMEL; this allows the loading of PMEL luminal fragment on ILVs to induce fibril nucleation. Post-translationally, APOE exists as multiple glycosylated and sialylated glycoforms within cells and in plasma. The extent of glycosylation and sialylation are tissue and context specific. In terms of processing, glycated in plasma VLDL. Phosphorylated by FAM20C in the extracellular medium.

It localises to the secreted. The protein resides in the extracellular space. It is found in the extracellular matrix. Its subcellular location is the extracellular vesicle. The protein localises to the endosome. It localises to the multivesicular body. Functionally, APOE is an apolipoprotein, a protein associating with lipid particles, that mainly functions in lipoprotein-mediated lipid transport between organs via the plasma and interstitial fluids. APOE is a core component of plasma lipoproteins and is involved in their production, conversion and clearance. Apolipoproteins are amphipathic molecules that interact both with lipids of the lipoprotein particle core and the aqueous environment of the plasma. As such, APOE associates with chylomicrons, chylomicron remnants, very low density lipoproteins (VLDL) and intermediate density lipoproteins (IDL) but shows a preferential binding to high-density lipoproteins (HDL). It also binds a wide range of cellular receptors including the LDL receptor/LDLR, the LDL receptor-related proteins LRP1, LRP2 and LRP8 and the very low-density lipoprotein receptor/VLDLR that mediate the cellular uptake of the APOE-containing lipoprotein particles. Finally, APOE also has a heparin-binding activity and binds heparan-sulfate proteoglycans on the surface of cells, a property that supports the capture and the receptor-mediated uptake of APOE-containing lipoproteins by cells. A main function of APOE is to mediate lipoprotein clearance through the uptake of chylomicrons, VLDLs, and HDLs by hepatocytes. APOE is also involved in the biosynthesis by the liver of VLDLs as well as their uptake by peripheral tissues ensuring the delivery of triglycerides and energy storage in muscle, heart and adipose tissues. By participating in the lipoprotein-mediated distribution of lipids among tissues, APOE plays a critical role in plasma and tissues lipid homeostasis. APOE is also involved in two steps of reverse cholesterol transport, the HDLs-mediated transport of cholesterol from peripheral tissues to the liver, and thereby plays an important role in cholesterol homeostasis. First, it is functionally associated with ABCA1 in the biogenesis of HDLs in tissues. Second, it is enriched in circulating HDLs and mediates their uptake by hepatocytes. APOE also plays an important role in lipid transport in the central nervous system, regulating neuron survival and sprouting. The polypeptide is Apolipoprotein E (Apoe) (Grammomys surdaster (African woodland thicket rat)).